A 742-amino-acid polypeptide reads, in one-letter code: Collectin-12 (742 aa).

Over 1–37 the chain is Cytoplasmic; the sequence is MKDDFAEEEEVQSFGYKRFGIQEGTQCTKCKNNWALK. A helical; Signal-anchor for type II membrane protein transmembrane segment spans residues 38 to 58; sequence FSIILLYILCVLLTITIAILG. At 59-742 the chain is on the extracellular side; that stretch reads YKVVEKMDNV…DMDKEQIFGV (684 aa). Coiled coils occupy residues 71-101 and 271-334; these read GLETSHRRYTEKLTEVESDLKKLDDQAGQKA and NNSA…QLEE. The segment at 439-605 is disordered; sequence TILQGPPGPR…SEPTSVPEAN (167 aa). 2 Collagen-like domains span residues 467–526 and 527–586; these read GQKG…SGDP and GPPG…PGPP. The span at 475–492 shows a compositional bias: pro residues; sequence PGPPGPAGEKGPPGPIGP. Low complexity-rich tracts occupy residues 502–522 and 532–556; these read RGSPGSKGQRGSPGKTGLPGP and QGKDGPQGPQGPPGFQGLQGTVGEP. The span at 571-589 shows a compositional bias: pro residues; it reads PGLPGPKGPPGPPGPPGPG. 3 disulfides stabilise this stretch: Cys-607-Cys-618, Cys-635-Cys-730, and Cys-708-Cys-722. Residues 614–731 form the C-type lectin domain; sequence YTEKCYYFSI…CEDVNNFICE (118 aa). Ca(2+)-binding residues include Ile-644, Asn-646, Glu-650, Asp-670, and Glu-674. 3 residues coordinate a carbohydrate: Lys-691, Gln-694, and Asp-696. Ca(2+) is bound by residues Gln-694, Asp-696, Asn-697, Glu-706, Asp-707, Asn-718, Asp-719, and Glu-731. An a carbohydrate-binding site is contributed by Glu-706. Asn-718 and Asp-719 together coordinate a carbohydrate.

In terms of tissue distribution, widely expressed.

It is found in the membrane. In terms of biological role, scavenger receptor that displays several functions associated with host defense. Binds to carbohydrates. The chain is Collectin-12 (COLEC12) from Gallus gallus (Chicken).